Consider the following 541-residue polypeptide: Probable inorganic phosphate transporter 1-12 (541 aa).

Over 1–26 the chain is Cytoplasmic; the sequence is MGRQDQQLQVLNALDAAKTQWYHFTA. Residues 27–47 traverse the membrane as a helical segment; it reads IIVAGMGFFTDAYDLFCISLV. At 48 to 70 the chain is on the extracellular side; the sequence is TKLLGRIYYTDPASPTPGSLPPN. Residues 71-91 form a helical membrane-spanning segment; sequence IAAAVNGVALCGTLSGQLFFG. Over 92–100 the chain is Cytoplasmic; it reads WLGDKLGRK. Residues 101–121 traverse the membrane as a helical segment; sequence SVYGMTLLLMVICSIASGLSF. Residues 122–124 are Extracellular-facing; the sequence is SHT. A helical membrane pass occupies residues 125–145; the sequence is PTSVMATLCFFRFWLGFGIGG. The Cytoplasmic segment spans residues 146–163; the sequence is DYPLSATIMSEYANKKTR. The chain crosses the membrane as a helical span at residues 164–184; that stretch reads GAFIAAVFAMQGFGILAGGVV. The Extracellular portion of the chain corresponds to 185-213; that stretch reads TLAMSAGFQAAFPAPAYEVNAAASTVPQA. A helical membrane pass occupies residues 214 to 234; it reads DYVWRIILMLGALPAILTYYW. The Cytoplasmic portion of the chain corresponds to 235-297; that stretch reads RMKMPETARY…ARFAKRHGAH (63 aa). Residues 298–318 traverse the membrane as a helical segment; sequence LLGTAATWFLVDVAYYSQNLF. At 319–349 the chain is on the extracellular side; that stretch reads QKDIFTSIHWIPKARTMSELEEVFRISRAQT. The chain crosses the membrane as a helical span at residues 350–370; sequence LIALCGTVPGYWFTVFLIDII. Residues 371–374 are Cytoplasmic-facing; the sequence is GRFK. Residues 375–395 traverse the membrane as a helical segment; sequence IQLLGFAGMTAFMLGLAIPYH. The Extracellular portion of the chain corresponds to 396–403; sequence HWTMPGNQ. A helical transmembrane segment spans residues 404 to 424; the sequence is VIFVFLYGFTFFFANFGPNAT. Topologically, residues 425-443 are cytoplasmic; sequence TFIVPAEIFPARLRSTCHG. The chain crosses the membrane as a helical span at residues 444–464; it reads ISAASGKAGAIIGAFGFLYAA. The Extracellular segment spans residues 465 to 484; sequence QPQDKAHVDAGYKPGIGVRN. The helical transmembrane segment at 485 to 505 threads the bilayer; it reads ALFVLAGCNLVGFLMTWMLVP. The Cytoplasmic segment spans residues 506–541; sequence ESKGKSLEEMSGEADDEEASANGGATAVNSSGVEMV. Positions 512–541 are disordered; the sequence is LEEMSGEADDEEASANGGATAVNSSGVEMV. A compositionally biased stretch (acidic residues) spans 515–524; sequence MSGEADDEEA. A compositionally biased stretch (polar residues) spans 532-541; it reads AVNSSGVEMV.

This sequence belongs to the major facilitator superfamily. Phosphate:H(+) symporter (TC 2.A.1.9) family.

It localises to the membrane. High-affinity transporter for external inorganic phosphate. The sequence is that of Probable inorganic phosphate transporter 1-12 (PHT1-12) from Oryza sativa subsp. japonica (Rice).